The chain runs to 51 residues: Insulin (51 aa).

3 disulfide bridges follow: Cys7–Cys37, Cys19–Cys50, and Cys36–Cys41.

This sequence belongs to the insulin family. Heterodimer of a B chain and an A chain linked by two disulfide bonds.

The protein localises to the secreted. Its function is as follows. Insulin decreases blood glucose concentration. It increases cell permeability to monosaccharides, amino acids and fatty acids. It accelerates glycolysis, the pentose phosphate cycle, and glycogen synthesis in liver. This chain is Insulin (INS), found in Ptyas dhumnades (Big-eyed ratsnake).